Here is a 449-residue protein sequence, read N- to C-terminus: Glutamyl-tRNA reductase (449 aa).

Residues 49-52 (TCNR), S107, 112-114 (EPQ), and Q118 each bind substrate. The active-site Nucleophile is the C50. 187–192 (GAGETI) contacts NADP(+). Positions 418 to 449 (QLVERSSEGDDSQQAGADGGAARGDRRAAGGS) are disordered. Positions 440–449 (RGDRRAAGGS) are enriched in basic and acidic residues.

It belongs to the glutamyl-tRNA reductase family. Homodimer.

It catalyses the reaction (S)-4-amino-5-oxopentanoate + tRNA(Glu) + NADP(+) = L-glutamyl-tRNA(Glu) + NADPH + H(+). Its pathway is porphyrin-containing compound metabolism; protoporphyrin-IX biosynthesis; 5-aminolevulinate from L-glutamyl-tRNA(Glu): step 1/2. Its function is as follows. Catalyzes the NADPH-dependent reduction of glutamyl-tRNA(Glu) to glutamate 1-semialdehyde (GSA). This chain is Glutamyl-tRNA reductase, found in Halorhodospira halophila (strain DSM 244 / SL1) (Ectothiorhodospira halophila (strain DSM 244 / SL1)).